The chain runs to 97 residues: UPF0147 protein MA_0092 (97 aa).

It belongs to the UPF0147 family.

This chain is UPF0147 protein MA_0092, found in Methanosarcina acetivorans (strain ATCC 35395 / DSM 2834 / JCM 12185 / C2A).